A 405-amino-acid polypeptide reads, in one-letter code: CRS2-associated factor 1, mitochondrial (405 aa).

The N-terminal 20 residues, 1–20, are a transit peptide targeting the mitochondrion; sequence MFLIRLSRHNPSSFTLLTRR. A disordered region spans residues 32 to 75; sequence RDLYNFQSPPPLSSSASENPDFNQKNNNKKKPKPQYRPPSSLEG. 2 CRM domains span residues 157–255 and 277–373; these read ASLT…KRPK and DGLS…KEDD. A disordered region spans residues 384 to 405; sequence SIDSDVDLSCSRGAQDSPDETT.

Part of large ribonucleo-protein complexes that include group IIB introns.

It localises to the mitochondrion. Functionally, may be involved in the splicing of group IIB introns in mitochondria. The polypeptide is CRS2-associated factor 1, mitochondrial (Arabidopsis thaliana (Mouse-ear cress)).